The chain runs to 453 residues: Maltotriose-binding protein (453 aa).

Residues 1-29 (MKRGIYAVLLVGVLIFSVVASGCIGGTQT) form the signal peptide. The segment covering 27–65 (TQTQTETQTPEKTQTPTTTQPSPTTTTSPTQTTSQTPTE) has biased composition (low complexity). The tract at residues 27 to 73 (TQTQTETQTPEKTQTPTTTQPSPTTTTSPTQTTSQTPTETETHTQEA) is disordered.

This sequence belongs to the bacterial solute-binding protein 1 family.

Its function is as follows. Involved in an abc transport system for maltotriose. The chain is Maltotriose-binding protein (malE) from Pyrococcus abyssi (strain GE5 / Orsay).